Consider the following 311-residue polypeptide: Sulfate adenylyltransferase subunit 2 (311 aa).

It belongs to the PAPS reductase family. CysD subfamily. As to quaternary structure, heterodimer composed of CysD, the smaller subunit, and CysN.

It carries out the reaction sulfate + ATP + H(+) = adenosine 5'-phosphosulfate + diphosphate. The protein operates within sulfur metabolism; hydrogen sulfide biosynthesis; sulfite from sulfate: step 1/3. Functionally, with CysN forms the ATP sulfurylase (ATPS) that catalyzes the adenylation of sulfate producing adenosine 5'-phosphosulfate (APS) and diphosphate, the first enzymatic step in sulfur assimilation pathway. APS synthesis involves the formation of a high-energy phosphoric-sulfuric acid anhydride bond driven by GTP hydrolysis by CysN coupled to ATP hydrolysis by CysD. In Caulobacter vibrioides (strain ATCC 19089 / CIP 103742 / CB 15) (Caulobacter crescentus), this protein is Sulfate adenylyltransferase subunit 2.